A 488-amino-acid polypeptide reads, in one-letter code: Putative sugar transporter ERD6-like 13 (488 aa).

Helical transmembrane passes span 51–71 (LILLFTTFTALCGTFSYGTAA), 89–109 (LAEFSFFGAVLTIGGLVGAAM), 116–138 (VFGRRGALGVSNSFCMAGWLMIA), 151–171 (LFLGVAAGVASYVVPVYIVEI), 182–202 (AINSLVMCASVAVTYLLGSVI), 207–227 (LALISTVPCVFEFVGLFFIPE), 291–311 (VGIGLLVLQQLGGLSGYTFYL), 324–344 (VGVMMASVVQSVTSVLGIVIV), 353–373 (LTVATIMMCLGSLITGLSFLF), 390–410 (GVLVFLTSITIGIGGIPWVMI), 423–445 (GTLCNLTSWSSNWFVSYTFNFLF), and 451–471 (GVFFIYTMISGVGILFVMKMV).

The protein belongs to the major facilitator superfamily. Sugar transporter (TC 2.A.1.1) family.

It localises to the membrane. Functionally, sugar transporter. The polypeptide is Putative sugar transporter ERD6-like 13 (Arabidopsis thaliana (Mouse-ear cress)).